A 525-amino-acid polypeptide reads, in one-letter code: Bifunctional purine biosynthesis protein PurH (525 aa).

In terms of domain architecture, MGS-like spans 1–149; sequence MSDPVIKRAL…KNHESVTVIT (149 aa).

Belongs to the PurH family.

It carries out the reaction (6R)-10-formyltetrahydrofolate + 5-amino-1-(5-phospho-beta-D-ribosyl)imidazole-4-carboxamide = 5-formamido-1-(5-phospho-D-ribosyl)imidazole-4-carboxamide + (6S)-5,6,7,8-tetrahydrofolate. The enzyme catalyses IMP + H2O = 5-formamido-1-(5-phospho-D-ribosyl)imidazole-4-carboxamide. Its pathway is purine metabolism; IMP biosynthesis via de novo pathway; 5-formamido-1-(5-phospho-D-ribosyl)imidazole-4-carboxamide from 5-amino-1-(5-phospho-D-ribosyl)imidazole-4-carboxamide (10-formyl THF route): step 1/1. The protein operates within purine metabolism; IMP biosynthesis via de novo pathway; IMP from 5-formamido-1-(5-phospho-D-ribosyl)imidazole-4-carboxamide: step 1/1. In Chlorobium phaeobacteroides (strain BS1), this protein is Bifunctional purine biosynthesis protein PurH.